Consider the following 440-residue polypeptide: Asparagine--tRNA ligase (440 aa).

This sequence belongs to the class-II aminoacyl-tRNA synthetase family. As to quaternary structure, homodimer.

It is found in the cytoplasm. The catalysed reaction is tRNA(Asn) + L-asparagine + ATP = L-asparaginyl-tRNA(Asn) + AMP + diphosphate + H(+). The sequence is that of Asparagine--tRNA ligase from Roseiflexus sp. (strain RS-1).